Reading from the N-terminus, the 130-residue chain is uncharacterized protein (130 aa).

Positions 23–130 (SHLRLLPTAN…GAHQLSSPSS (108 aa)) are disordered. Over residues 30–45 (TANSPSGSNQPTNPNR) the composition is skewed to polar residues.

This is an uncharacterized protein from Homo sapiens (Human).